The sequence spans 152 residues: Deoxyuridine 5'-triphosphate nucleotidohydrolase (152 aa).

Substrate contacts are provided by residues 71–73, Asn-84, 88–90, and Met-98; these read RSG and LID.

It belongs to the dUTPase family. Mg(2+) is required as a cofactor.

The catalysed reaction is dUTP + H2O = dUMP + diphosphate + H(+). Its pathway is pyrimidine metabolism; dUMP biosynthesis; dUMP from dCTP (dUTP route): step 2/2. In terms of biological role, this enzyme is involved in nucleotide metabolism: it produces dUMP, the immediate precursor of thymidine nucleotides and it decreases the intracellular concentration of dUTP so that uracil cannot be incorporated into DNA. The chain is Deoxyuridine 5'-triphosphate nucleotidohydrolase from Klebsiella pneumoniae subsp. pneumoniae (strain ATCC 700721 / MGH 78578).